The chain runs to 131 residues: Glycine cleavage system H protein (131 aa).

Residues 24-106 (TLRVGITDYA…YGEGWLVDLQ (83 aa)) enclose the Lipoyl-binding domain. At K65 the chain carries N6-lipoyllysine.

This sequence belongs to the GcvH family. In terms of assembly, the glycine cleavage system is composed of four proteins: P, T, L and H. (R)-lipoate is required as a cofactor.

In terms of biological role, the glycine cleavage system catalyzes the degradation of glycine. The H protein shuttles the methylamine group of glycine from the P protein to the T protein. In Mycobacterium sp. (strain JLS), this protein is Glycine cleavage system H protein.